A 120-amino-acid chain; its full sequence is Small ribosomal subunit protein uS10 (120 aa).

Residues Ser-16 and Ser-18 each carry the phosphoserine modification.

Belongs to the universal ribosomal protein uS10 family. Expressed ubiquitously in embryos, highest expression is in the midgut.

The chain is Small ribosomal subunit protein uS10 (RpS20) from Drosophila melanogaster (Fruit fly).